The sequence spans 129 residues: ATP synthase epsilon chain (129 aa).

This sequence belongs to the ATPase epsilon chain family. As to quaternary structure, F-type ATPases have 2 components, CF(1) - the catalytic core - and CF(0) - the membrane proton channel. CF(1) has five subunits: alpha(3), beta(3), gamma(1), delta(1), epsilon(1). CF(0) has three main subunits: a, b and c.

It localises to the cell inner membrane. Produces ATP from ADP in the presence of a proton gradient across the membrane. This is ATP synthase epsilon chain from Campylobacter jejuni subsp. doylei (strain ATCC BAA-1458 / RM4099 / 269.97).